Consider the following 334-residue polypeptide: uncharacterized protein (334 aa).

Belongs to the PAPS reductase family.

This is an uncharacterized protein from Escherichia phage 186 (Bacteriophage 186).